Here is a 358-residue protein sequence, read N- to C-terminus: DNA polymerase IV (358 aa).

Positions 4-185 (IIHIDMDCYF…LSLRKIPGVG (182 aa)) constitute a UmuC domain. Mg(2+)-binding residues include Asp8 and Asp103. Residue Glu104 is part of the active site.

This sequence belongs to the DNA polymerase type-Y family. Monomer. Mg(2+) is required as a cofactor.

Its subcellular location is the cytoplasm. It carries out the reaction DNA(n) + a 2'-deoxyribonucleoside 5'-triphosphate = DNA(n+1) + diphosphate. Poorly processive, error-prone DNA polymerase involved in untargeted mutagenesis. Copies undamaged DNA at stalled replication forks, which arise in vivo from mismatched or misaligned primer ends. These misaligned primers can be extended by PolIV. Exhibits no 3'-5' exonuclease (proofreading) activity. May be involved in translesional synthesis, in conjunction with the beta clamp from PolIII. In Shewanella sp. (strain W3-18-1), this protein is DNA polymerase IV.